The primary structure comprises 144 residues: MNRTILVPIDISDSELTQRVISHVEEEAKIDDAEVHFLTVIPSLPYYASLGLAYSAELPAMDDLKAEAKSQLEEIIKKFKLPTDRVHVHVEEGSPKDRILELAKKIPAHMIIIASHRPDITTYLLGSNAAAVVRHAECSVLVVR.

Belongs to the universal stress protein A family. As to quaternary structure, homodimer.

The sequence is that of Universal stress protein F (uspF) from Escherichia coli (strain K12).